We begin with the raw amino-acid sequence, 310 residues long: Metal ABC transporter substrate-binding lipoprotein ScbA (310 aa).

The N-terminal stretch at 1-19 is a signal peptide; the sequence is MKKCRFLVLLLLAFVGLAA. A lipid anchor (N-palmitoyl cysteine) is attached at cysteine 20. A lipid anchor (S-diacylglycerol cysteine) is attached at cysteine 20. Residues histidine 68, histidine 140, glutamate 206, and aspartate 281 each contribute to the a divalent metal cation site.

It belongs to the bacterial solute-binding protein 9 family.

It localises to the cell membrane. Functionally, part of an ATP-binding cassette (ABC) transport system involved in metal import. Binds a metal with high affinity and specificity and delivers it to the membrane permease for translocation into the cytoplasm. Part of an ATP-driven transport system for manganese. Does not exhibit adhesion properties. This chain is Metal ABC transporter substrate-binding lipoprotein ScbA (scbA), found in Streptococcus cristatus.